We begin with the raw amino-acid sequence, 94 residues long: DNA gyrase subunit A (94 aa).

Residues 35-94 enclose the Topo IIA-type catalytic domain; sequence LPDVRDGLKPVHRRILYGLNEQGMTPDKPYKKSARIVGDVMGKYHPHGDSSIYEAMVRMA.

This sequence belongs to the type II topoisomerase GyrA/ParC subunit family. As to quaternary structure, heterotetramer, composed of two GyrA and two GyrB chains. In the heterotetramer, GyrA contains the active site tyrosine that forms a transient covalent intermediate with DNA, while GyrB binds cofactors and catalyzes ATP hydrolysis.

The protein resides in the cytoplasm. The catalysed reaction is ATP-dependent breakage, passage and rejoining of double-stranded DNA.. In terms of biological role, a type II topoisomerase that negatively supercoils closed circular double-stranded (ds) DNA in an ATP-dependent manner to modulate DNA topology and maintain chromosomes in an underwound state. Negative supercoiling favors strand separation, and DNA replication, transcription, recombination and repair, all of which involve strand separation. Also able to catalyze the interconversion of other topological isomers of dsDNA rings, including catenanes and knotted rings. Type II topoisomerases break and join 2 DNA strands simultaneously in an ATP-dependent manner. In Staphylococcus epidermidis, this protein is DNA gyrase subunit A.